The following is a 294-amino-acid chain: 4-hydroxybenzoate octaprenyltransferase (294 aa).

Helical transmembrane passes span 20-42 (LLRI…ALWL), 98-118 (WEAV…VVLF), 120-140 (NTLT…YPFM), 145-165 (HLPQ…AWAA), 175-195 (WLLF…YAMV), 218-238 (AIIA…GQRA), 242-262 (SFYY…QYLA), and 274-294 (FLNN…DLAF).

The protein belongs to the UbiA prenyltransferase family. Mg(2+) is required as a cofactor.

Its subcellular location is the cell inner membrane. The enzyme catalyses all-trans-octaprenyl diphosphate + 4-hydroxybenzoate = 4-hydroxy-3-(all-trans-octaprenyl)benzoate + diphosphate. The protein operates within cofactor biosynthesis; ubiquinone biosynthesis. Its function is as follows. Catalyzes the prenylation of para-hydroxybenzoate (PHB) with an all-trans polyprenyl group. Mediates the second step in the final reaction sequence of ubiquinone-8 (UQ-8) biosynthesis, which is the condensation of the polyisoprenoid side chain with PHB, generating the first membrane-bound Q intermediate 3-octaprenyl-4-hydroxybenzoate. This is 4-hydroxybenzoate octaprenyltransferase from Marinobacter nauticus (strain ATCC 700491 / DSM 11845 / VT8) (Marinobacter aquaeolei).